Consider the following 119-residue polypeptide: Large ribosomal subunit protein uL18 (119 aa).

The interval 54–76 is disordered; that stretch reads LTSASTLADDVEGETPTEESRSV.

It belongs to the universal ribosomal protein uL18 family. As to quaternary structure, part of the 50S ribosomal subunit; part of the 5S rRNA/L5/L18/L25 subcomplex. Contacts the 5S and 23S rRNAs.

Functionally, this is one of the proteins that bind and probably mediate the attachment of the 5S RNA into the large ribosomal subunit, where it forms part of the central protuberance. This is Large ribosomal subunit protein uL18 from Salinibacter ruber (strain DSM 13855 / M31).